The primary structure comprises 63 residues: Protein DsrB (63 aa).

Belongs to the DsrB family.

This is Protein DsrB from Yersinia pseudotuberculosis serotype O:3 (strain YPIII).